The chain runs to 51 residues: MEMKRVMMSSAERSKEKKRSISRRLGKYMKEQKGRIYIIRRCMVMLLCSHD.

The interval 1–25 is disordered; it reads MEMKRVMMSSAERSKEKKRSISRRL. The segment covering 16 to 25 has biased composition (basic residues); that stretch reads EKKRSISRRL. Residues 20-51 form a required for DVL/RTFL small polypeptide activity region; the sequence is SISRRLGKYMKEQKGRIYIIRRCMVMLLCSHD. A helical membrane pass occupies residues 28 to 44; the sequence is YMKEQKGRIYIIRRCMV.

This sequence belongs to the DVL/RTFL small polypeptides family. In terms of tissue distribution, mostly expressed in leaves and, to a lower extent, in roots and stems.

The protein resides in the cell membrane. In terms of biological role, small polypeptide acting as a regulatory molecule which coordinates cellular responses required for differentiation, growth and development, including leaves shape, pedicule elongation, inflorescence organization and fruit maturation, probably by restricting polar cell proliferation in lateral organs and coordinating socket cell recruitment and differentiation at trichome sites. The polypeptide is Small polypeptide DEVIL 1 (Arabidopsis thaliana (Mouse-ear cress)).